The primary structure comprises 385 residues: Protein pelota homolog (385 aa).

The protein belongs to the eukaryotic release factor 1 family. Pelota subfamily. Component of the Pelota-HBS1L complex, also named Dom34-Hbs1 complex, composed of PELO and HBS1L. A divalent metal cation is required as a cofactor.

The protein localises to the cytoplasm. Its function is as follows. Component of the Pelota-HBS1L complex, a complex that recognizes stalled ribosomes and triggers the No-Go Decay (NGD) pathway. In the Pelota-HBS1L complex, PELO recognizes ribosomes stalled at the 3' end of an mRNA and engages stalled ribosomes by destabilizing mRNA in the mRNA channel. Following mRNA extraction from stalled ribosomes by the SKI complex, the Pelota-HBS1L complex promotes recruitment of ABCE1, which drives the disassembly of stalled ribosomes, followed by degradation of damaged mRNAs as part of the NGD pathway. The sequence is that of Protein pelota homolog (pelo) from Danio rerio (Zebrafish).